The chain runs to 290 residues: 4-hydroxybenzoate octaprenyltransferase (290 aa).

The next 8 membrane-spanning stretches (helical) occupy residues 24 to 44 (IGFF…HKGI), 48 to 68 (VVLI…CIIN), 98 to 118 (LVAL…LNFI), 142 to 162 (FPQV…FTAI), 171 to 191 (WLLF…YAMI), 214 to 234 (FLIG…GWKE), 239 to 259 (VFYF…QILI), and 270 to 290 (AFLS…SSFH).

It belongs to the UbiA prenyltransferase family. It depends on Mg(2+) as a cofactor.

The protein localises to the cell inner membrane. The enzyme catalyses all-trans-octaprenyl diphosphate + 4-hydroxybenzoate = 4-hydroxy-3-(all-trans-octaprenyl)benzoate + diphosphate. It participates in cofactor biosynthesis; ubiquinone biosynthesis. Functionally, catalyzes the prenylation of para-hydroxybenzoate (PHB) with an all-trans polyprenyl group. Mediates the second step in the final reaction sequence of ubiquinone-8 (UQ-8) biosynthesis, which is the condensation of the polyisoprenoid side chain with PHB, generating the first membrane-bound Q intermediate 3-octaprenyl-4-hydroxybenzoate. In Blochmanniella pennsylvanica (strain BPEN), this protein is 4-hydroxybenzoate octaprenyltransferase.